Here is a 97-residue protein sequence, read N- to C-terminus: Co-chaperonin GroES (97 aa).

The protein belongs to the GroES chaperonin family. As to quaternary structure, heptamer of 7 subunits arranged in a ring. Interacts with the chaperonin GroEL.

The protein localises to the cytoplasm. Together with the chaperonin GroEL, plays an essential role in assisting protein folding. The GroEL-GroES system forms a nano-cage that allows encapsulation of the non-native substrate proteins and provides a physical environment optimized to promote and accelerate protein folding. GroES binds to the apical surface of the GroEL ring, thereby capping the opening of the GroEL channel. This chain is Co-chaperonin GroES, found in Enterobacter sp. (strain 638).